The chain runs to 356 residues: 3-isopropylmalate dehydrogenase (356 aa).

4 residues coordinate substrate: R95, R105, R133, and D223. Residues D223, D247, and D251 each coordinate Mg(2+). 281 to 293 (GSAPDIAGQNKAN) provides a ligand contact to NAD(+).

The protein belongs to the isocitrate and isopropylmalate dehydrogenases family. LeuB type 1 subfamily. In terms of assembly, homodimer. Mg(2+) serves as cofactor. Requires Mn(2+) as cofactor.

It localises to the cytoplasm. The catalysed reaction is (2R,3S)-3-isopropylmalate + NAD(+) = 4-methyl-2-oxopentanoate + CO2 + NADH. The protein operates within amino-acid biosynthesis; L-leucine biosynthesis; L-leucine from 3-methyl-2-oxobutanoate: step 3/4. In terms of biological role, catalyzes the oxidation of 3-carboxy-2-hydroxy-4-methylpentanoate (3-isopropylmalate) to 3-carboxy-4-methyl-2-oxopentanoate. The product decarboxylates to 4-methyl-2 oxopentanoate. The polypeptide is 3-isopropylmalate dehydrogenase (Neisseria meningitidis serogroup B (strain ATCC BAA-335 / MC58)).